The chain runs to 215 residues: Adenylate kinase (215 aa).

10-15 (GAGKGT) contacts ATP. The tract at residues 30-59 (STGDILRANVREGTELGLAAKAYMDKGELV) is NMP. Residues Thr31, Arg36, 57–59 (ELV), 85–88 (GYPR), and Gln92 contribute to the AMP site. Residues 126–162 (GRLMCKCGASYHTIANPPKKDNICDICGGEVYQRDDD) are LID. Arg127 contributes to the ATP binding site. 2 residues coordinate Zn(2+): Cys130 and Cys132. 135-136 (SY) is a binding site for ATP. The Zn(2+) site is built by Cys149 and Cys152. AMP is bound by residues Arg159 and Arg170. Lys198 is a binding site for ATP.

It belongs to the adenylate kinase family. As to quaternary structure, monomer.

It is found in the cytoplasm. It carries out the reaction AMP + ATP = 2 ADP. Its pathway is purine metabolism; AMP biosynthesis via salvage pathway; AMP from ADP: step 1/1. Its function is as follows. Catalyzes the reversible transfer of the terminal phosphate group between ATP and AMP. Plays an important role in cellular energy homeostasis and in adenine nucleotide metabolism. The sequence is that of Adenylate kinase from Methanosarcina mazei (strain ATCC BAA-159 / DSM 3647 / Goe1 / Go1 / JCM 11833 / OCM 88) (Methanosarcina frisia).